The primary structure comprises 419 residues: Probable sodium/metabolite cotransporter BASS2, chloroplastic (419 aa).

Residues 1–45 (MAASTTCPARSMASVSRALRPRPHAAIASAAVRTAARLGGGLGIV) constitute a chloroplast transit peptide. The next 9 helical transmembrane spans lie at 106 to 126 (IVEL…IIGI), 137 to 157 (TDLF…TLTF), 170 to 190 (VGVG…AIAM), 194 to 214 (LSAP…GQAS), 225 to 245 (VALS…MTPL), 259 to 279 (AAGL…VGVL), 291 to 311 (IISI…ASPI), 323 to 343 (GQLI…GYWL), and 384 to 404 (VPSA…AVFW).

The protein belongs to the bile acid:sodium symporter (BASS) (TC 2.A.28) family.

It localises to the membrane. Its subcellular location is the plastid. The protein localises to the chloroplast envelope. Its function is as follows. May function as sodium-coupled metabolite transporter across the chloroplast envelope. The polypeptide is Probable sodium/metabolite cotransporter BASS2, chloroplastic (BASS2) (Oryza sativa subsp. japonica (Rice)).